A 171-amino-acid polypeptide reads, in one-letter code: Tetratricopeptide repeat protein 9C (171 aa).

3 TPR repeats span residues 8–41 (AQLY…LRGL), 72–107 (TDCY…QPEN), and 108–141 (AKAL…QPKD).

Belongs to the TTC9 family.

This chain is Tetratricopeptide repeat protein 9C (Ttc9c), found in Rattus norvegicus (Rat).